The chain runs to 506 residues: Probable alpha-L-arabinofuranosidase B (506 aa).

A signal peptide spans 1-26 (MLSQPSRERAFVLALGLVVSSSLAAA). The interval 27–343 (APCDIYSSGG…ADIVAANYAV (317 aa)) is catalytic. 3 cysteine pairs are disulfide-bonded: C29–C39, C89–C94, and C184–C185. D227 provides a ligand contact to substrate. E229 functions as the Nucleophile in the catalytic mechanism. A substrate-binding site is contributed by N230. Residue N285 is glycosylated (N-linked (GlcNAc...) asparagine). G304 is a binding site for substrate. Residue D305 is the Proton donor of the active site. Residues 344 to 506 (TSLTSGPALT…VSWVISSGFA (163 aa)) form an ABD region. The cysteines at positions 409 and 447 are disulfide-linked. Substrate contacts are provided by H424, N426, F427, D443, H471, L476, and D496.

It belongs to the glycosyl hydrolase 54 family.

It is found in the secreted. The enzyme catalyses Hydrolysis of terminal non-reducing alpha-L-arabinofuranoside residues in alpha-L-arabinosides.. The protein operates within glycan metabolism; L-arabinan degradation. Functionally, alpha-L-arabinofuranosidase involved in the degradation of arabinoxylan, a major component of plant hemicellulose. Able to hydrolyze 1,5-, 1,3- and 1,2-alpha-linkages not only in L-arabinofuranosyl oligosaccharides, but also in polysaccharides containing terminal non-reducing L-arabinofuranoses in side chains, like L-arabinan, arabinogalactan and arabinoxylan. This Aspergillus clavatus (strain ATCC 1007 / CBS 513.65 / DSM 816 / NCTC 3887 / NRRL 1 / QM 1276 / 107) protein is Probable alpha-L-arabinofuranosidase B (abfB).